The primary structure comprises 199 residues: Ribonuclease HII (199 aa).

Residues 13–199 (GLVAGVDEVG…FAPIAKILCG (187 aa)) form the RNase H type-2 domain. Residues D19, E20, and D110 each contribute to the a divalent metal cation site.

The protein belongs to the RNase HII family. Mn(2+) is required as a cofactor. It depends on Mg(2+) as a cofactor.

It is found in the cytoplasm. The enzyme catalyses Endonucleolytic cleavage to 5'-phosphomonoester.. Functionally, endonuclease that specifically degrades the RNA of RNA-DNA hybrids. In Jannaschia sp. (strain CCS1), this protein is Ribonuclease HII.